A 553-amino-acid polypeptide reads, in one-letter code: Urocanate hydratase (553 aa).

Residues 51-52 (GG), glutamine 129, 175-177 (GMG), glutamate 195, arginine 200, 241-242 (NA), 262-266 (QTSAH), 272-273 (YL), and tyrosine 321 contribute to the NAD(+) site. Cysteine 409 is an active-site residue. Residue glycine 491 coordinates NAD(+).

The protein belongs to the urocanase family. NAD(+) is required as a cofactor.

It is found in the cytoplasm. The enzyme catalyses 4-imidazolone-5-propanoate = trans-urocanate + H2O. It functions in the pathway amino-acid degradation; L-histidine degradation into L-glutamate; N-formimidoyl-L-glutamate from L-histidine: step 2/3. Functionally, catalyzes the conversion of urocanate to 4-imidazolone-5-propionate. The polypeptide is Urocanate hydratase (Sphingopyxis alaskensis (strain DSM 13593 / LMG 18877 / RB2256) (Sphingomonas alaskensis)).